Consider the following 110-residue polypeptide: UPF0213 protein DVU_3309 (110 aa).

The GIY-YIG domain maps to 8 to 83 (EVWFVYLLRC…KRQPTDQKLA (76 aa)).

This sequence belongs to the UPF0213 family.

The sequence is that of UPF0213 protein DVU_3309 from Nitratidesulfovibrio vulgaris (strain ATCC 29579 / DSM 644 / CCUG 34227 / NCIMB 8303 / VKM B-1760 / Hildenborough) (Desulfovibrio vulgaris).